The following is a 212-amino-acid chain: MSLFDKKHLVTQADALPGRNTPMPIATLHAVNEHSMTNVPAGMEIAYFAMGCFWGVERLFWQLPGVYSTAAGYAGGYTPNPTYREVCSGQTGHAEAVRIVYDPAVIRYEQLLQTFWENHDPTQGMQQGNDHGTQYRSAIYPLTPEQNAAAHASRERFQSAMAAAGDHRPITTEIAHATPFYYAEDEHQQYLHKNPYGYCGIGGIGVCLPPDA.

Residue Cys-52 is part of the active site.

The protein belongs to the MsrA Met sulfoxide reductase family.

It catalyses the reaction L-methionyl-[protein] + [thioredoxin]-disulfide + H2O = L-methionyl-(S)-S-oxide-[protein] + [thioredoxin]-dithiol. It carries out the reaction [thioredoxin]-disulfide + L-methionine + H2O = L-methionine (S)-S-oxide + [thioredoxin]-dithiol. Functionally, has an important function as a repair enzyme for proteins that have been inactivated by oxidation. Catalyzes the reversible oxidation-reduction of methionine sulfoxide in proteins to methionine. This is Peptide methionine sulfoxide reductase MsrA from Salmonella paratyphi A (strain AKU_12601).